The following is a 952-amino-acid chain: MDNGGSVLSLSAPHFPYSATILRRHSPVASISFSLKQPPPQPPEPPESPPDLRRPEKSIGSSSSSSSPSPIPSPKTPLKINPLKGLTNRSSVSPLVQSEVSSKVSSFGSSLASKLRLSSKLSPPPPPPPPPPVEETTQFRDEFRSDTKPPEEETRNPQQEFRQEGKIFVGNLPTWIKKPEFEEFFRQFGPIENVILIKGHHEVEKNAGFGFIIYAAEKSAMKAVEFDGVEFHGRILTVKLDDGKRLKTKAEQRVRWVEEGEEDTKMSNKSSWHQEREGSRKSLQRILDTNGDNWQAVISAFEKISKPSRTEFGLMVKFYGRRGDMHRARETFERMRARGITPTSRIYTSLIHAYAVGRDMDEALSCVRKMKEEGIEMSLVTYSVIVGGFSKAGHAEAADYWFDEAKRIHKTLNASIYGKIIYAHCQTCNMERAEALVREMEEEGIDAPIAIYHTMMDGYTMVADEKKGLVVFKRLKECGFTPTVVTYGCLINLYTKVGKISKALEVSRVMKEEGVKHNLKTYSMMINGFVKLKDWANAFAVFEDMVKEGMKPDVILYNNIISAFCGMGNMDRAIQTVKEMQKLRHRPTTRTFMPIIHGYAKSGDMRRSLEVFDMMRRCGCVPTVHTFNGLINGLVEKRQMEKAVEILDEMTLAGVSANEHTYTKIMQGYASVGDTGKAFEYFTRLQNEGLDVDIFTYEALLKACCKSGRMQSALAVTKEMSARNIPRNSFVYNILIDGWARRGDVWEAADLIQQMKKEGVKPDIHTYTSFISACSKAGDMNRATQTIEEMEALGVKPNIKTYTTLIKGWARASLPEKALSCYEEMKAMGIKPDKAVYHCLLTSLLSRASIAEAYIYSGVMTICKEMVEAGLIVDMGTAVHWSKCLCKIEASGGELTETLQKTFPPDWSSHHHHHGFLDQVSDVDSDEDDVDGEDGEDDEDVNSVSDLLSPYK.

The N-terminal 60 residues, 1-60 (MDNGGSVLSLSAPHFPYSATILRRHSPVASISFSLKQPPPQPPEPPESPPDLRRPEKSIG), are a transit peptide targeting the chloroplast. 2 disordered regions span residues 30–95 (SISF…VSPL) and 115–163 (LRLS…EFRQ). A compositionally biased stretch (pro residues) spans 37-49 (QPPPQPPEPPESP). Over residues 58-68 (SIGSSSSSSSP) the composition is skewed to low complexity. Pro residues predominate over residues 122–133 (SPPPPPPPPPPV). A compositionally biased stretch (basic and acidic residues) spans 137-163 (TQFRDEFRSDTKPPEEETRNPQQEFRQ). The 72-residue stretch at 167–238 (IFVGNLPTWI…VEFHGRILTV (72 aa)) folds into the RRM domain. Over residues 259–280 (EGEEDTKMSNKSSWHQEREGSR) the composition is skewed to basic and acidic residues. The tract at residues 259–281 (EGEEDTKMSNKSSWHQEREGSRK) is disordered. PPR repeat units lie at residues 308-342 (SRTE…GITP), 343-377 (TSRI…GIEM), 378-412 (SLVT…HKTL), 413-447 (NASI…GIDA), 448-482 (PIAI…GFTP), 483-517 (TVVT…GVKH), 518-552 (NLKT…GMKP), 553-587 (DVIL…RHRP), 588-622 (TTRT…GCVP), 623-657 (TVHT…GVSA), 658-692 (NEHT…GLDV), 693-727 (DIFT…NIPR), 728-762 (NSFV…GVKP), 763-797 (DIHT…GVKP), and 798-832 (NIKT…GIKP). Residues 918–952 (DQVSDVDSDEDDVDGEDGEDDEDVNSVSDLLSPYK) are disordered. The span at 921-941 (SDVDSDEDDVDGEDGEDDEDV) shows a compositional bias: acidic residues.

The protein belongs to the PPR family. P subfamily.

The protein localises to the plastid. The protein resides in the chloroplast. May play a role in the plastid ribosome biogenesis. In Arabidopsis thaliana (Mouse-ear cress), this protein is Pentatricopeptide repeat-containing protein At5g04810, chloroplastic (PPR4).